Consider the following 263-residue polypeptide: Type III pantothenate kinase (263 aa).

ATP is bound at residue Asp9–Lys16. Substrate is bound by residues Tyr103 and Gly110–Arg113. Residue Asp112 is the Proton acceptor of the active site. Residue Asp134 coordinates K(+). ATP is bound at residue Thr137. Thr190 provides a ligand contact to substrate.

It belongs to the type III pantothenate kinase family. In terms of assembly, homodimer. NH4(+) serves as cofactor. K(+) is required as a cofactor.

It localises to the cytoplasm. The enzyme catalyses (R)-pantothenate + ATP = (R)-4'-phosphopantothenate + ADP + H(+). The protein operates within cofactor biosynthesis; coenzyme A biosynthesis; CoA from (R)-pantothenate: step 1/5. Functionally, catalyzes the phosphorylation of pantothenate (Pan), the first step in CoA biosynthesis. In Oleidesulfovibrio alaskensis (strain ATCC BAA-1058 / DSM 17464 / G20) (Desulfovibrio alaskensis), this protein is Type III pantothenate kinase.